The chain runs to 498 residues: ATP synthase subunit beta, chloroplastic (498 aa).

172–179 (GGAGVGKT) serves as a coordination point for ATP.

Belongs to the ATPase alpha/beta chains family. In terms of assembly, F-type ATPases have 2 components, CF(1) - the catalytic core - and CF(0) - the membrane proton channel. CF(1) has five subunits: alpha(3), beta(3), gamma(1), delta(1), epsilon(1). CF(0) has four main subunits: a(1), b(1), b'(1) and c(9-12).

It localises to the plastid. It is found in the chloroplast thylakoid membrane. It catalyses the reaction ATP + H2O + 4 H(+)(in) = ADP + phosphate + 5 H(+)(out). In terms of biological role, produces ATP from ADP in the presence of a proton gradient across the membrane. The catalytic sites are hosted primarily by the beta subunits. The protein is ATP synthase subunit beta, chloroplastic of Idiospermum australiense (Ribbonwood tree).